Here is a 541-residue protein sequence, read N- to C-terminus: Chaperonin GroEL 2 (541 aa).

Residues 29–32 (TLGP), 86–90 (DGTTT), G413, and D492 each bind ATP.

It belongs to the chaperonin (HSP60) family. Forms a cylinder of 14 subunits composed of two heptameric rings stacked back-to-back. Interacts with the co-chaperonin GroES.

It is found in the cytoplasm. The enzyme catalyses ATP + H2O + a folded polypeptide = ADP + phosphate + an unfolded polypeptide.. Functionally, together with its co-chaperonin GroES, plays an essential role in assisting protein folding. The GroEL-GroES system forms a nano-cage that allows encapsulation of the non-native substrate proteins and provides a physical environment optimized to promote and accelerate protein folding. This Acidothermus cellulolyticus (strain ATCC 43068 / DSM 8971 / 11B) protein is Chaperonin GroEL 2.